A 634-amino-acid chain; its full sequence is Proline and serine-rich protein 3 (634 aa).

Disordered stretches follow at residues 1-69, 81-142, 185-242, 368-455, and 472-534; these read MFPK…LIDN, FRQA…TSLA, DASS…ATLK, VPPT…FEGP, and FPDS…TAPK. Residues 15–24 are compositionally biased toward polar residues; it reads RTGATRSQRP. Low complexity-rich tracts occupy residues 40–56, 128–140, and 185–202; these read ESWPSSSWTPSPASTTE, VTGPSPTGVSSTS, and DASSSSFPISSDGLSPSS. Polar residues predominate over residues 203–215; it reads VTFNPDSNKSSNP. The segment covering 368–377 has biased composition (low complexity); sequence VPPTSTSTTP. The segment covering 378–399 has biased composition (pro residues); that stretch reads APTPTPQVCIPGPPTSAPPPCA. Over residues 436-448 the composition is skewed to polar residues; it reads VSTSSHQKTTVPD. Residues 503–515 show a composition bias toward basic and acidic residues; that stretch reads PESRRGSKTESRK. Phosphoserine is present on Ser588.

Its subcellular location is the cytoplasm. It localises to the cytoskeleton. The protein resides in the microtubule organizing center. The protein localises to the centrosome. The polypeptide is Proline and serine-rich protein 3 (Proser3) (Mus musculus (Mouse)).